We begin with the raw amino-acid sequence, 281 residues long: Elongation factor Ts (281 aa).

Residues 86–89 form an involved in Mg(2+) ion dislocation from EF-Tu region; the sequence is TDFV.

This sequence belongs to the EF-Ts family.

The protein resides in the cytoplasm. In terms of biological role, associates with the EF-Tu.GDP complex and induces the exchange of GDP to GTP. It remains bound to the aminoacyl-tRNA.EF-Tu.GTP complex up to the GTP hydrolysis stage on the ribosome. The chain is Elongation factor Ts from Beutenbergia cavernae (strain ATCC BAA-8 / DSM 12333 / CCUG 43141 / JCM 11478 / NBRC 16432 / NCIMB 13614 / HKI 0122).